A 576-amino-acid polypeptide reads, in one-letter code: RING finger and SPRY domain-containing protein 1 (576 aa).

The first 16 residues, 1 to 16, serve as a signal peptide directing secretion; that stretch reads MIVFGWAVFLASRSLG. Serine 50 is subject to Phosphoserine. A disordered region spans residues 50-99; it reads SGTDDSVDTQQQQAENSAVPTADTRSQPRDPVRPPRRGRGPHEPRRKKQN. The segment covering 57-68 has biased composition (polar residues); that stretch reads DTQQQQAENSAV. Positions 83–97 are enriched in basic residues; that stretch reads PPRRGRGPHEPRRKK. The B30.2/SPRY domain maps to 300-483; sequence LFLKEGRQLT…CEFNFGAKPF (184 aa). N-linked (GlcNAc...) asparagine glycosylation occurs at asparagine 314. The segment at 527-562 adopts an RING-type zinc-finger fold; it reads CSLCCDEVADTQLKPCGHSDLCMDCALQLETCPLCR.

Its subcellular location is the secreted. The protein is RING finger and SPRY domain-containing protein 1 (RSPRY1) of Pongo abelii (Sumatran orangutan).